The sequence spans 241 residues: Polycomb group RING finger protein 3 (241 aa).

The RING-type zinc-finger motif lies at 17-56 (CRLCSGYLIDATTVTECLHTFCRSCLVKYLEENNTCPTCR). The disordered stretch occupies residues 115-148 (AKQHLDPRNGETKADDNSNKETAEEKQEEDNDYH). The span at 117–139 (QHLDPRNGETKADDNSNKETAEE) shows a compositional bias: basic and acidic residues. The interaction with BCORL1 stretch occupies residues 131 to 241 (NSNKETAEEK…LHYRPKMDLL (111 aa)).

In terms of assembly, component of a PRC1-like complex that contains PCGF3, RNF2 and RYBP. Interacts with RNF2. Interacts with CBX6, CBX7 and CBX8. Interacts with BCORL1.

Its subcellular location is the nucleus. The protein resides in the nucleoplasm. Component of a Polycomb group (PcG) multiprotein PRC1-like complex, a complex class required to maintain the transcriptionally repressive state of many genes, including Hox genes, throughout development. PcG PRC1 complex acts via chromatin remodeling and modification of histones; it mediates monoubiquitination of histone H2A 'Lys-119', rendering chromatin heritably changed in its expressibility. Within the PRC1-like complex, regulates RNF2 ubiquitin ligase activity. Plays a redundant role with PCGF5 as part of a PRC1-like complex that mediates monoubiquitination of histone H2A 'Lys-119' on the X chromosome and is required for normal silencing of one copy of the X chromosome in XX females. The protein is Polycomb group RING finger protein 3 (PcgF3) of Mus musculus (Mouse).